We begin with the raw amino-acid sequence, 470 residues long: Isocitrate dehydrogenase (NAD(+)), mitochondrial (470 aa).

The N-terminal 26 residues, 1–26 (MTRVERGRVLARAIERAVAHRASARR), are a transit peptide targeting the mitochondrion. NAD(+) contacts are provided by residues 138-140 (TVT) and asparagine 159. Residues 157 to 163 (SPNGAMR), arginine 193, tyrosine 200, lysine 275, and aspartate 319 contribute to the D-threo-isocitrate site. Aspartate 319 is a Mg(2+) binding site. NAD(+) is bound at residue lysine 324. Aspartate 343 is a binding site for D-threo-isocitrate. Mg(2+) is bound by residues aspartate 343 and aspartate 347. Residues 380–385 (HGTVAD) and asparagine 399 each bind NAD(+).

This sequence belongs to the isocitrate and isopropylmalate dehydrogenases family. In terms of assembly, forms homodimers. It depends on Mg(2+) as a cofactor. Requires Mn(2+) as cofactor.

It is found in the mitochondrion. It catalyses the reaction D-threo-isocitrate + NAD(+) = 2-oxoglutarate + CO2 + NADH. Its activity is regulated as follows. The homodimer exhibits allosteric regulation by isocitrate. In terms of biological role, performs an essential role in the oxidative function of the tricarboxylic acid cycle and respiration. Catalyzes the decarboxylation of isocitrate to produce 2-oxoglutarate and generate NADH to provide electrons for energy production. The chain is Isocitrate dehydrogenase (NAD(+)), mitochondrial from Ostreococcus tauri.